A 93-amino-acid chain; its full sequence is Cobalt transport protein CbiN (93 aa).

A run of 2 helical transmembrane segments spans residues 5–25 (LILL…DHGG) and 62–82 (SLLF…ILGY).

This sequence belongs to the CbiN family. In terms of assembly, forms an energy-coupling factor (ECF) transporter complex composed of an ATP-binding protein (A component, CbiO), a transmembrane protein (T component, CbiQ) and 2 possible substrate-capture proteins (S components, CbiM and CbiN) of unknown stoichimetry.

Its subcellular location is the cell inner membrane. The protein operates within cofactor biosynthesis; adenosylcobalamin biosynthesis. Its function is as follows. Part of the energy-coupling factor (ECF) transporter complex CbiMNOQ involved in cobalt import. This is Cobalt transport protein CbiN from Citrobacter koseri (strain ATCC BAA-895 / CDC 4225-83 / SGSC4696).